The primary structure comprises 388 residues: Succinate--CoA ligase [ADP-forming] subunit beta (388 aa).

Residues 9 to 244 (KSLFAEYGLP…PSQDDAREAH (236 aa)) form the ATP-grasp domain. ATP contacts are provided by residues lysine 46, 53–55 (GRG), glutamate 99, threonine 102, and glutamate 107. 2 residues coordinate Mg(2+): asparagine 199 and aspartate 213. Substrate contacts are provided by residues asparagine 264 and 321 to 323 (GIV).

Belongs to the succinate/malate CoA ligase beta subunit family. Heterotetramer of two alpha and two beta subunits. The cofactor is Mg(2+).

It carries out the reaction succinate + ATP + CoA = succinyl-CoA + ADP + phosphate. It catalyses the reaction GTP + succinate + CoA = succinyl-CoA + GDP + phosphate. Its pathway is carbohydrate metabolism; tricarboxylic acid cycle; succinate from succinyl-CoA (ligase route): step 1/1. In terms of biological role, succinyl-CoA synthetase functions in the citric acid cycle (TCA), coupling the hydrolysis of succinyl-CoA to the synthesis of either ATP or GTP and thus represents the only step of substrate-level phosphorylation in the TCA. The beta subunit provides nucleotide specificity of the enzyme and binds the substrate succinate, while the binding sites for coenzyme A and phosphate are found in the alpha subunit. The sequence is that of Succinate--CoA ligase [ADP-forming] subunit beta from Shewanella sp. (strain ANA-3).